We begin with the raw amino-acid sequence, 43 residues long: uncharacterized protein (43 aa).

The N-terminal stretch at 1 to 16 (MKLLNFILIIFNALKS) is a signal peptide. Asparagine 37 carries an N-linked (GlcNAc...) asparagine; by host glycan.

This is an uncharacterized protein from Acheta domesticus (House cricket).